Consider the following 215-residue polypeptide: Ribose-5-phosphate isomerase A (215 aa).

Substrate contacts are provided by residues 26 to 29 (TGST), 79 to 82 (DGAD), and 92 to 95 (KGGG). Catalysis depends on E101, which acts as the Proton acceptor. Residue K119 coordinates substrate.

The protein belongs to the ribose 5-phosphate isomerase family. Homodimer.

The enzyme catalyses aldehydo-D-ribose 5-phosphate = D-ribulose 5-phosphate. The protein operates within carbohydrate degradation; pentose phosphate pathway; D-ribose 5-phosphate from D-ribulose 5-phosphate (non-oxidative stage): step 1/1. In terms of biological role, catalyzes the reversible conversion of ribose-5-phosphate to ribulose 5-phosphate. This chain is Ribose-5-phosphate isomerase A, found in Xylella fastidiosa (strain Temecula1 / ATCC 700964).